Reading from the N-terminus, the 88-residue chain is Small ribosomal subunit protein bS20 (88 aa).

The interval Met-1–Met-27 is disordered.

It belongs to the bacterial ribosomal protein bS20 family.

Its function is as follows. Binds directly to 16S ribosomal RNA. The protein is Small ribosomal subunit protein bS20 of Shewanella denitrificans (strain OS217 / ATCC BAA-1090 / DSM 15013).